Reading from the N-terminus, the 100-residue chain is Urease subunit gamma (100 aa).

The protein belongs to the urease gamma subunit family. As to quaternary structure, heterotrimer of UreA (gamma), UreB (beta) and UreC (alpha) subunits. Three heterotrimers associate to form the active enzyme.

It localises to the cytoplasm. The enzyme catalyses urea + 2 H2O + H(+) = hydrogencarbonate + 2 NH4(+). The protein operates within nitrogen metabolism; urea degradation; CO(2) and NH(3) from urea (urease route): step 1/1. This chain is Urease subunit gamma, found in Chromohalobacter salexigens (strain ATCC BAA-138 / DSM 3043 / CIP 106854 / NCIMB 13768 / 1H11).